Reading from the N-terminus, the 1225-residue chain is Catenin delta-2 (1225 aa).

Disordered regions lie at residues 1-51 (MFAR…TSAI), 87-117 (SETG…EDEL), 134-242 (SGIL…HLPD), and 256-312 (SSTL…KSYS). Composition is skewed to polar residues over residues 20–51 (QPSS…TSAI) and 98–108 (AEEQFQWQSQD). Positions 49–84 (SAILASVKEQELQFERLTRELEAERQIVASQLERCK) form a coiled coil. Over residues 149 to 160 (SLLSQSALQLNS) the composition is skewed to low complexity. Polar residues-rich tracts occupy residues 172–187 (YHSN…TPSQ) and 195–209 (ARAT…TTSR). Arg-209 bears the Omega-N-methylarginine mark. Residues 217–229 (EPAPPPPPPPREP) are compositionally biased toward pro residues. Arg-264 carries the omega-N-methylarginine modification. Residues Ser-267 and Ser-276 each carry the phosphoserine modification. An omega-N-methylarginine mark is found at Arg-282 and Arg-296. A compositionally biased stretch (polar residues) spans 299-312 (SPKQSPSRLAKSYS). A phosphoserine mark is found at Ser-327, Ser-360, Ser-415, and Ser-461. The stretch at 394–438 (GSRASYSSQHGHLGPELRALQSPEHHIDPIYEDRVYQKPPMRSLS) is one ARM 1 repeat. 2 disordered regions span residues 432 to 483 (PPMR…NAAA) and 514 to 542 (SPYS…QKDP). Polar residues predominate over residues 469 to 478 (LQRTGSQHGP). Ser-514 is modified (phosphoserine). Residue Tyr-516 is modified to Phosphotyrosine. ARM repeat units follow at residues 540–579 (KDPR…HLCF), 582–621 (NKIK…NLVY), 626–666 (DDNK…NLSS), 682–724 (LTNA…NVSS), 728–773 (EARR…NLSY), 835–875 (PKGI…NLAA), 882–921 (VYIR…NMAL), and 975–1018 (MENA…SMWQ). Positions 1042 to 1077 (TIERDRQRPYSSSRTPSISPVRVSPNNRSASAPASP) are disordered. Positions 1050–1059 (PYSSSRTPSI) are enriched in polar residues. Ser-1065 and Ser-1076 each carry phosphoserine. Residues 1065 to 1077 (SPNNRSASAPASP) are compositionally biased toward low complexity.

The protein belongs to the beta-catenin family. Binds to E-cadherin at a juxtamembrane site within the cytoplasmic domain. Interacts with PDZD2. Interacts with ZBTB33. Binds to PSEN1. Interacts with ARHGEF28. Interacts (via the extreme C-terminus) with FRMPD2 (via the PDZ 2 domain). Interacts with CDK5. Interacts with CTNNB1. Interacts with GSK3A and GSK3B. Interacts with DNM2. Interacts with CCDC85B. O-glycosylated. Post-translationally, phosphorylated by CDK5. Phosphorylated by GSK3B. As to expression, expressed in brain; highest expression is observed in fetal brain.

The protein localises to the nucleus. It localises to the cell junction. Its subcellular location is the adherens junction. The protein resides in the cell projection. It is found in the dendrite. The protein localises to the perikaryon. Has a critical role in neuronal development, particularly in the formation and/or maintenance of dendritic spines and synapses. Involved in the regulation of Wnt signaling. It probably acts on beta-catenin turnover, facilitating beta-catenin interaction with GSK3B, phosphorylation, ubiquitination and degradation. Functions as a transcriptional activator when bound to ZBTB33. May be involved in neuronal cell adhesion and tissue morphogenesis and integrity by regulating adhesion molecules. This Homo sapiens (Human) protein is Catenin delta-2 (CTNND2).